The primary structure comprises 286 residues: 3-amino-tetrahydro-pyrrolizinone reductase (286 aa).

Residue Tyr146 is the Proton acceptor of the active site.

This sequence belongs to the short-chain dehydrogenases/reductases (SDR) family.

The enzyme catalyses 3-amino-5,6,7,7a-tetrahydro-1H-pyrrolizin-1-one + AH2 = 3-amino-tetrahydro-1H-pyrrolizin-1-ol + A. Functionally, involved in the biosynthetic pathway of pyrrolizwilline, a pyrrolizidine alkaloid. Catalyzes the reduction of 3-amino-tetrahydro-pyrrolizinone to 3-amino-tetrahydro-pyrrolizinol. This Xenorhabdus hominickii protein is 3-amino-tetrahydro-pyrrolizinone reductase (xhpD).